Here is a 339-residue protein sequence, read N- to C-terminus: NADP-dependent dehydrogenase M3 (339 aa).

NADP(+)-binding residues include Ser-49, Ile-51, Asp-93, Tyr-206, Lys-210, Ile-240, and Gln-244. Tyr-206 acts as the Proton acceptor in catalysis. Lys-210 functions as the Lowers pKa of active site Tyr in the catalytic mechanism.

This sequence belongs to the short-chain dehydrogenases/reductases (SDR) family. As to quaternary structure, homodimer.

It is found in the cytoplasm. It localises to the cytosol. It functions in the pathway secondary metabolite biosynthesis. NADP-dependent dehydrogenase; part of the gene cluster that mediates the biosynthesis of squalestatin S1 (SQS1, also known as zaragozic acid A), a heavily oxidized fungal polyketide that offers potent cholesterol lowering activity by targeting squalene synthase (SS). SQS1 is composed of a 2,8-dioxobicyclic[3.2.1]octane-3,4,5-tricarboxyclic acid core that is connected to two lipophilic polyketide arms. These initial steps feature the priming of an unusual benzoic acid starter unit onto the highly reducing polyketide synthase pks2, followed by oxaloacetate extension and product release to generate a tricarboxylic acid containing product. The phenylalanine ammonia lyase (PAL) M7 and the acyl-CoA ligase M9 are involved in transforming phenylalanine into benzoyl-CoA. The citrate synthase-like protein R3 is involved in connecting the C-alpha-carbons of the hexaketide chain and oxaloacetate to afford the tricarboxylic acid unit. The potential hydrolytic enzymes, M8 and M10, are in close proximity to pks2 and may participate in product release. On the other side, the tetraketide arm is synthesized by a the squalestatin tetraketide synthase pks1 and enzymatically esterified to the core in the last biosynthetic step, by the acetyltransferase M4. The biosynthesis of the tetraketide must involve 3 rounds of chain extension. After the first and second rounds methyl-transfer occurs, and in all rounds of extension the ketoreductase and dehydratase are active. The enoyl reductase and C-MeT of pks1 are not active in the final round of extension. The acetyltransferase M4 appears to have a broad substrate selectivity for its acyl CoA substrate, allowing the in vitro synthesis of novel squalestatins. The biosynthesis of SQS1 requires several oxidative steps likely performed by oxidoreductases M1, R1 and R2. Finally, in support of the identification of the cluster as being responsible for SQS1 production, the cluster contains a gene encoding a putative squalene synthase (SS) R6, suggesting a likely mechanism for self-resistance. The sequence is that of NADP-dependent dehydrogenase M3 from Phoma sp. (strain ATCC 20986 / MF5453).